Reading from the N-terminus, the 425-residue chain is Bifunctional phosphoribosylaminoimidazole carboxylase/phosphoribosylaminoimidazole succinocarboxamide synthetase (425 aa).

Ala-2 is subject to N-acetylalanine. An SAICAR synthetase domain region spans residues 2 to 260; sequence ATAEVLNIGR…WVADRVELLL (259 aa). Phosphotyrosine is present on Tyr-22. Ser-27 carries the phosphoserine modification. An N6-acetyllysine modification is found at Lys-36. A Phosphoserine modification is found at Ser-107. At Thr-238 the chain carries Phosphothreonine. Lys-247 carries the post-translational modification N6-acetyllysine. Positions 261-266 are linker; the sequence is KSNSQC. Residues 267–425 are AIR carboxylase domain; that stretch reads RVVVLMGSTS…ADKKIRECNL (159 aa). Ser-274 bears the Phosphoserine mark. Position 332 (Ser-332) interacts with CO2.

It in the N-terminal section; belongs to the SAICAR synthetase family. In the C-terminal section; belongs to the AIR carboxylase family. Class II subfamily. In terms of assembly, homooctamer.

It carries out the reaction 5-amino-1-(5-phospho-D-ribosyl)imidazole-4-carboxylate + L-aspartate + ATP = (2S)-2-[5-amino-1-(5-phospho-beta-D-ribosyl)imidazole-4-carboxamido]succinate + ADP + phosphate + 2 H(+). The catalysed reaction is 5-amino-1-(5-phospho-D-ribosyl)imidazole-4-carboxylate + H(+) = 5-amino-1-(5-phospho-beta-D-ribosyl)imidazole + CO2. The protein operates within purine metabolism; IMP biosynthesis via de novo pathway; 5-amino-1-(5-phospho-D-ribosyl)imidazole-4-carboxamide from 5-amino-1-(5-phospho-D-ribosyl)imidazole-4-carboxylate: step 1/2. Its pathway is purine metabolism; IMP biosynthesis via de novo pathway; 5-amino-1-(5-phospho-D-ribosyl)imidazole-4-carboxylate from 5-amino-1-(5-phospho-D-ribosyl)imidazole (carboxylase route): step 1/1. Bifunctional phosphoribosylaminoimidazole carboxylase and phosphoribosylaminoimidazole succinocarboxamide synthetase catalyzing two reactions of the de novo purine biosynthetic pathway. The sequence is that of Bifunctional phosphoribosylaminoimidazole carboxylase/phosphoribosylaminoimidazole succinocarboxamide synthetase from Rattus norvegicus (Rat).